The primary structure comprises 1366 residues: DNA-directed RNA polymerase subunit beta' (1366 aa).

The interval Met-1–Arg-40 is disordered. Over residues Lys-7–Lys-24 the composition is skewed to basic residues. Polar residues predominate over residues Gln-25–Ser-38. The Zn(2+) site is built by Cys-250, Cys-317, Cys-324, and Cys-327. The disordered stretch occupies residues Thr-1299–Glu-1366. Positions Ala-1353–Glu-1366 are enriched in low complexity.

This sequence belongs to the RNA polymerase beta' chain family. RpoC2 subfamily. In terms of assembly, in cyanobacteria the RNAP catalytic core is composed of 2 alpha, 1 beta, 1 beta', 1 gamma and 1 omega subunit. When a sigma factor is associated with the core the holoenzyme is formed, which can initiate transcription. The cofactor is Zn(2+).

It catalyses the reaction RNA(n) + a ribonucleoside 5'-triphosphate = RNA(n+1) + diphosphate. DNA-dependent RNA polymerase catalyzes the transcription of DNA into RNA using the four ribonucleoside triphosphates as substrates. The polypeptide is DNA-directed RNA polymerase subunit beta' (Prochlorococcus marinus (strain MIT 9211)).